The chain runs to 215 residues: Chloramphenicol acetyltransferase (215 aa).

His189 functions as the Proton acceptor in the catalytic mechanism.

Belongs to the chloramphenicol acetyltransferase family. In terms of assembly, homotrimer.

The enzyme catalyses chloramphenicol + acetyl-CoA = chloramphenicol 3-acetate + CoA. This enzyme is an effector of chloramphenicol resistance in bacteria. The sequence is that of Chloramphenicol acetyltransferase (cat) from Staphylococcus aureus.